Reading from the N-terminus, the 457-residue chain is Bifunctional protein GlmU (457 aa).

A pyrophosphorylase region spans residues 1 to 228 (MEGLVTLILA…SEEITGVNSR (228 aa)). UDP-N-acetyl-alpha-D-glucosamine is bound by residues 9–12 (LAAG), Lys23, Gln73, and 78–79 (GT). Asp102 contacts Mg(2+). Positions 139, 154, 169, and 226 each coordinate UDP-N-acetyl-alpha-D-glucosamine. A Mg(2+)-binding site is contributed by Asn226. A linker region spans residues 229 to 249 (VQLFEAEKIMRKRINYRHMEN). The interval 250-457 (GVTIVDPDTT…VQERIKKGRL (208 aa)) is N-acetyltransferase. Positions 331 and 349 each coordinate UDP-N-acetyl-alpha-D-glucosamine. His361 functions as the Proton acceptor in the catalytic mechanism. Residues Tyr364 and Asn375 each coordinate UDP-N-acetyl-alpha-D-glucosamine. Acetyl-CoA contacts are provided by residues 384 to 385 (NY), Ala421, and Arg438.

It in the N-terminal section; belongs to the N-acetylglucosamine-1-phosphate uridyltransferase family. In the C-terminal section; belongs to the transferase hexapeptide repeat family. As to quaternary structure, homotrimer. It depends on Mg(2+) as a cofactor.

It localises to the cytoplasm. It catalyses the reaction alpha-D-glucosamine 1-phosphate + acetyl-CoA = N-acetyl-alpha-D-glucosamine 1-phosphate + CoA + H(+). The catalysed reaction is N-acetyl-alpha-D-glucosamine 1-phosphate + UTP + H(+) = UDP-N-acetyl-alpha-D-glucosamine + diphosphate. The protein operates within nucleotide-sugar biosynthesis; UDP-N-acetyl-alpha-D-glucosamine biosynthesis; N-acetyl-alpha-D-glucosamine 1-phosphate from alpha-D-glucosamine 6-phosphate (route II): step 2/2. It functions in the pathway nucleotide-sugar biosynthesis; UDP-N-acetyl-alpha-D-glucosamine biosynthesis; UDP-N-acetyl-alpha-D-glucosamine from N-acetyl-alpha-D-glucosamine 1-phosphate: step 1/1. It participates in bacterial outer membrane biogenesis; LPS lipid A biosynthesis. Catalyzes the last two sequential reactions in the de novo biosynthetic pathway for UDP-N-acetylglucosamine (UDP-GlcNAc). The C-terminal domain catalyzes the transfer of acetyl group from acetyl coenzyme A to glucosamine-1-phosphate (GlcN-1-P) to produce N-acetylglucosamine-1-phosphate (GlcNAc-1-P), which is converted into UDP-GlcNAc by the transfer of uridine 5-monophosphate (from uridine 5-triphosphate), a reaction catalyzed by the N-terminal domain. This Thermoanaerobacter pseudethanolicus (strain ATCC 33223 / 39E) (Clostridium thermohydrosulfuricum) protein is Bifunctional protein GlmU.